The following is a 178-amino-acid chain: Redox-sensing transcriptional repressor Rex (178 aa).

59-64 (GVGNMG) lines the NAD(+) pocket.

The protein belongs to the transcriptional regulatory Rex family. As to quaternary structure, homodimer.

Its subcellular location is the cytoplasm. Modulates transcription in response to changes in cellular NADH/NAD(+) redox state. In Streptococcus suis, this protein is Redox-sensing transcriptional repressor Rex.